The chain runs to 95 residues: Alpha-conotoxin-like Cp20.5 (95 aa).

An N-terminal signal peptide occupies residues 1-24 (MPKLAVVLLVLLILPLSYFDAAGG). The propeptide occupies 25–45 (QAVQGDRRGNGLARYLQRNGR). At Glu-50 the chain carries 4-carboxyglutamate. Pro-56 bears the 4-hydroxyproline mark. Disulfide bonds link Cys-64/Cys-73, Cys-69/Cys-81, Cys-74/Cys-91, and Cys-79/Cys-93.

Belongs to the conotoxin D superfamily. In terms of assembly, hetero-, homo- or pseudo-homodimer (identical sequence, different post-translational modifications). Expressed by the venom duct.

The protein localises to the secreted. Alpha-conotoxins act on postsynaptic membranes, they bind to the nicotinic acetylcholine receptors (nAChR) and thus inhibit them. Through its two C-terminal domains, this homodimeric protein would bind to two nAChR allosteric sites, located outside the nAChR C-loop of the principal binding face and at the adjacent binding interface in a clockwise direction. This toxin specifically blocks mammalian neuronal nAChR of the alpha-7/CHRNA7, alpha-3-beta-2/CHRNA3-CHRNB2 and alpha-4-beta-2/CHRNA4-CHRNB2 subtypes. The sequence is that of Alpha-conotoxin-like Cp20.5 from Conus capitaneus (Captain cone).